A 243-amino-acid chain; its full sequence is Probable transcriptional regulatory protein LJ_0904 (243 aa).

Residues 1–22 (MSGHSKWHNIQGRKNAQDAKRG) are disordered.

Belongs to the TACO1 family.

The protein resides in the cytoplasm. The protein is Probable transcriptional regulatory protein LJ_0904 of Lactobacillus johnsonii (strain CNCM I-12250 / La1 / NCC 533).